A 203-amino-acid chain; its full sequence is Ribonuclease T (203 aa).

One can recognise an Exonuclease domain in the interval 11–185 (VVVDVETGGF…YDTEKTAELF (175 aa)). Positions 14, 16, 172, and 177 each coordinate Mg(2+). The active-site Proton donor/acceptor is His172.

The protein belongs to the RNase T family. In terms of assembly, homodimer. Mg(2+) is required as a cofactor.

Functionally, trims short 3' overhangs of a variety of RNA species, leaving a one or two nucleotide 3' overhang. Responsible for the end-turnover of tRNA: specifically removes the terminal AMP residue from uncharged tRNA (tRNA-C-C-A). Also appears to be involved in tRNA biosynthesis. This Pseudomonas putida (strain ATCC 47054 / DSM 6125 / CFBP 8728 / NCIMB 11950 / KT2440) protein is Ribonuclease T.